Here is a 317-residue protein sequence, read N- to C-terminus: tRNA dimethylallyltransferase (317 aa).

16-23 is an ATP binding site; that stretch reads GPTASGKS. Residue 18–23 coordinates substrate; sequence TASGKS. 3 interaction with substrate tRNA regions span residues 41–44, 165–169, and 247–252; these read DSAQ, QRIQR, and RCVGYR.

The protein belongs to the IPP transferase family. As to quaternary structure, monomer. Requires Mg(2+) as cofactor.

The catalysed reaction is adenosine(37) in tRNA + dimethylallyl diphosphate = N(6)-dimethylallyladenosine(37) in tRNA + diphosphate. Catalyzes the transfer of a dimethylallyl group onto the adenine at position 37 in tRNAs that read codons beginning with uridine, leading to the formation of N6-(dimethylallyl)adenosine (i(6)A). This chain is tRNA dimethylallyltransferase, found in Nitrosomonas europaea (strain ATCC 19718 / CIP 103999 / KCTC 2705 / NBRC 14298).